A 126-amino-acid chain; its full sequence is Ribosome-binding factor A (126 aa).

Belongs to the RbfA family. Monomer. Binds 30S ribosomal subunits, but not 50S ribosomal subunits or 70S ribosomes.

It localises to the cytoplasm. Functionally, one of several proteins that assist in the late maturation steps of the functional core of the 30S ribosomal subunit. Associates with free 30S ribosomal subunits (but not with 30S subunits that are part of 70S ribosomes or polysomes). Required for efficient processing of 16S rRNA. May interact with the 5'-terminal helix region of 16S rRNA. This is Ribosome-binding factor A from Thermosipho africanus (strain TCF52B).